The chain runs to 322 residues: Pyrroline-5-carboxylate reductase (322 aa).

Transmembrane regions (helical) follow at residues 9-29 and 117-137; these read YPNV…VGLL and ILIS…LHFW. A disordered region spans residues 302–322; that stretch reads LSQSAGSHGEDNTTDSKTSRA. Residue asparagine 313 is glycosylated (N-linked (GlcNAc...) asparagine).

Belongs to the pyrroline-5-carboxylate reductase family.

It is found in the membrane. The catalysed reaction is L-proline + NADP(+) = (S)-1-pyrroline-5-carboxylate + NADPH + 2 H(+). It catalyses the reaction L-proline + NAD(+) = (S)-1-pyrroline-5-carboxylate + NADH + 2 H(+). It participates in alkaloid biosynthesis. Its function is as follows. Pyrroline-5-carboxylate reductase; part of the gene cluster that mediates the biosynthesis of paraherquamide, a fungal indole alkaloid that belongs to a family of natural products containing a characteristic bicyclo[2.2.2]diazaoctane core. The first steps in the biosynthesis of paraherquamide is the production of the beta-methyl-proline precursor from L-isoleucine. They require oxidation of a terminally hydroxylated L-isoleucine to the corresponding aldehyde by enzymes which have still to be identified. Spontaneous cyclization and dehydration would yield the 4-methyl pyrolline-5-carboxylic acid, which is then reduced by the pyrroline-5-carboxylate reductase phqD leading to the beta-methyl-proline precursor. The next step of paraherquamide biosynthesis involves coupling of beta-methyl-proline and L-tryptophan by the bimodular NRPS phqB, to produce a monooxopiperazine intermediate. The reductase (R) domain of phqB utilizes NADPH for hydride transfer to reduce the thioester bond of the T domain-tethered linear dipeptide to a hemithioaminal intermediate, which spontaneously cleaves the C-S bond to release the aldehyde product. This compound undergoes spontaneous cyclization and dehydration to give a dienamine which is reverse prenylated at C-2 by the reverse prenyltransferase phqJ. The other prenyltransferase present in the cluster, phqI may be a redundant gene in the pathway. During biosynthetic assembly, the key step to produce the polycyclic core is catalyzed by the bifunctional reductase and intramolecular [4+2] Diels-Alderase, phqE, resulting in formation of the [2.2.2] diazaoctane intermediate preparaherquamide. Following formation of preparaherquamide, an indole 2,3-epoxidation-initiated pinacol-like rearrangement is catalyzed by the phqK FAD-dependent monooxygenase. The prenyltransferase phqA, the cytochrome P450 monooxygenase phqL, and the FAD-linked oxidoreductase phqH (or the cytochrome P450 monooxygenase phqM), are proposed to be involved in the formation of the pyran ring. The FAD-dependent monooxygenase phqK is likely responsible for generation of the spiro-oxindole, and the N-methylation is likely mediated by the phqN methyltransferase leading to the isolable natural product paraherquamide F. However, the order of these biosynthetic steps has still to be determined. In late-stage paraherquamide biosynthesis, the third P450 monooxygenase, phqO, is probably responsible for the C-14 hydroxylation, transforming paraherquamide F to paraherquamide G, and paraherquamide E to the final product paraherquamide A. The expansion from the 6-membered ring pyran (in paraherquamides F and G) to the 7-membered dioxepin ring (in paraherquamides A and E) represents a poorly understood but intriguing process that probably involves the 2-oxoglutarate-dependent dioxygenase phqC. Finally, the remaining members of the paraherquamide cluster, including phqI as well as phqM (or phqH), do not have a clearly prescribed role and appear to be redundant. This is Pyrroline-5-carboxylate reductase from Penicillium fellutanum.